The chain runs to 274 residues: MASKSGDGGTVCALEFAVQMSCQSCVDAVHKTLKGVAGVQNVDVQLENQMVLVQTTLPSQEVQALLESTGRQAVLKGMGSSQLQNLGAAVAILEGCGSIQGVVRFLQLSSELCLIEGTIDGLEPGLHGLHVHQYGDLTRDCNSCGDHFNPDGASHGGPQDTDRHRGDLGNVRAEAGGRATFRIEDKQLKVWDVIGRSLVIDEGEDDLGRGGHPLSKITGNSGKRLACGIIARSAGLFQNPKQICSCDGLTIWEERGRPIAGQGRKDSAQPPAHL.

Residues 11-74 form the HMA domain; sequence VCALEFAVQM…LLESTGRQAV (64 aa). Cu cation-binding residues include Cys22 and Cys25. Residue Lys76 forms a Glycyl lysine isopeptide (Lys-Gly) (interchain with G-Cter in ubiquitin) linkage. The superoxide dismutase-like stretch occupies residues 88 to 234; the sequence is AAVAILEGCG…LACGIIARSA (147 aa). A disulfide bridge links Cys141 with Cys227. His147, His155, His164, and Asp167 together coordinate Zn(2+). Residues Lys189, Lys216, and Lys241 each participate in a glycyl lysine isopeptide (Lys-Gly) (interchain with G-Cter in ubiquitin) cross-link. Residues Cys244 and Cys246 each coordinate Cu cation. Phosphoserine is present on Ser267.

It in the C-terminal section; belongs to the Cu-Zn superoxide dismutase family. As to quaternary structure, homodimer, and heterodimer with SOD1. Interacts with COMMD1. Interacts with XIAP/BIRC4. Interacts with SLC31A1(via C-terminal domain); this interaction is Cu(1+)-mediated. The heterodimer CCS:SOD1 interacts with SLC31A1; this heterotrimer is Cu(1+)-mediated and its maintenance is regulated through SOD1 activation. It depends on Cu(2+) as a cofactor. Requires Zn(2+) as cofactor. In terms of processing, ubiquitinion by XIAP/BIRC4 leads to enhancement of its chaperone activity toward its physiologic target, SOD1, rather than proteasomal degradation. XIAP/BIRC4 preferentially ubiquitinates at Lys-241. Ubiquitous.

Its subcellular location is the cytoplasm. In terms of biological role, delivers copper to copper zinc superoxide dismutase (SOD1). This is Copper chaperone for superoxide dismutase from Mus musculus (Mouse).